The following is a 147-amino-acid chain: Small ribosomal subunit protein bS18 (147 aa).

This sequence belongs to the bacterial ribosomal protein bS18 family. Part of the 30S ribosomal subunit. Forms a tight heterodimer with protein bS6.

Functionally, binds as a heterodimer with protein bS6 to the central domain of the 16S rRNA, where it helps stabilize the platform of the 30S subunit. The protein is Small ribosomal subunit protein bS18 of Dehalococcoides mccartyi (strain ATCC BAA-2100 / JCM 16839 / KCTC 5957 / BAV1).